The chain runs to 989 residues: Phosphoenolpyruvate carboxylase (989 aa).

Catalysis depends on residues H175 and K630.

This sequence belongs to the PEPCase type 1 family. Mg(2+) is required as a cofactor.

It carries out the reaction oxaloacetate + phosphate = phosphoenolpyruvate + hydrogencarbonate. Forms oxaloacetate, a four-carbon dicarboxylic acid source for the tricarboxylic acid cycle. This chain is Phosphoenolpyruvate carboxylase, found in Prochlorococcus marinus (strain MIT 9515).